We begin with the raw amino-acid sequence, 643 residues long: Phosphoenolpyruvate carboxykinase [GTP] (643 aa).

Substrate-binding positions include arginine 102 and tyrosine 253–glycine 255. Residues lysine 262 and histidine 282 each contribute to the Mn(2+) site. Serine 304 lines the substrate pocket. Residue alanine 305–asparagine 310 coordinates GTP. Residue cysteine 306 is part of the active site. Aspartate 329 contributes to the Mn(2+) binding site. Substrate is bound at residue asparagine 422–arginine 424. Residues arginine 424, arginine 455, and tyrosine 548–asparagine 551 contribute to the GTP site.

It belongs to the phosphoenolpyruvate carboxykinase [GTP] family. Monomer. Requires Mn(2+) as cofactor.

The enzyme catalyses oxaloacetate + GTP = phosphoenolpyruvate + GDP + CO2. Its function is as follows. In parasitic nematodes PEPCK carboxylates phosphoenolpyruvate to oxaloacetate thus introducing the products of glycolysis to mitochondrial metabolism. Catalyzes the conversion of oxaloacetate (OAA) to phosphoenolpyruvate (PEP), the rate-limiting step in the metabolic pathway that produces glucose from lactate and other precursors derived from the citric acid cycle. The polypeptide is Phosphoenolpyruvate carboxykinase [GTP] (PEPCK) (Ascaris suum (Pig roundworm)).